We begin with the raw amino-acid sequence, 381 residues long: Succinyl-diaminopimelate desuccinylase (381 aa).

His-69 is a binding site for Zn(2+). The active site involves Asp-71. A Zn(2+)-binding site is contributed by Asp-103. Residue Glu-137 is the Proton acceptor of the active site. Residues Glu-138, Glu-166, and His-355 each contribute to the Zn(2+) site.

It belongs to the peptidase M20A family. DapE subfamily. In terms of assembly, homodimer. It depends on Zn(2+) as a cofactor. Co(2+) serves as cofactor.

The enzyme catalyses N-succinyl-(2S,6S)-2,6-diaminopimelate + H2O = (2S,6S)-2,6-diaminopimelate + succinate. It functions in the pathway amino-acid biosynthesis; L-lysine biosynthesis via DAP pathway; LL-2,6-diaminopimelate from (S)-tetrahydrodipicolinate (succinylase route): step 3/3. Functionally, catalyzes the hydrolysis of N-succinyl-L,L-diaminopimelic acid (SDAP), forming succinate and LL-2,6-diaminopimelate (DAP), an intermediate involved in the bacterial biosynthesis of lysine and meso-diaminopimelic acid, an essential component of bacterial cell walls. In Rickettsia felis (strain ATCC VR-1525 / URRWXCal2) (Rickettsia azadi), this protein is Succinyl-diaminopimelate desuccinylase.